The primary structure comprises 50 residues: Protein PsbN (50 aa).

The chain crosses the membrane as a helical span at residues 14–34 (VAVTILAVLLALTGFGLWTAF).

This sequence belongs to the PsbN family.

Its subcellular location is the cellular thylakoid membrane. Its function is as follows. May play a role in photosystem I and II biogenesis. This is Protein PsbN from Prochlorococcus marinus (strain MIT 9515).